The chain runs to 218 residues: Ras-related protein RABA1h (218 aa).

20 to 27 (GDSGVGKS) provides a ligand contact to GTP. The Effector region motif lies at 42–50 (SRSTIGVEF). Residues 68-72 (DTAGQ), 126-129 (NKAD), and 156-157 (SA) each bind GTP. 2 S-geranylgeranyl cysteine lipidation sites follow: Cys215 and Cys216.

Belongs to the small GTPase superfamily. Rab family.

The protein localises to the cell membrane. Functionally, intracellular vesicle trafficking and protein transport. This chain is Ras-related protein RABA1h (RABA1H), found in Arabidopsis thaliana (Mouse-ear cress).